A 440-amino-acid chain; its full sequence is Mitochondrial translation factor 2 (440 aa).

A mitochondrion-targeting transit peptide spans 1-15; it reads MIRTSSILKNCNYRY.

The protein resides in the mitochondrion matrix. Functionally, required for the processing and/or for the stability of the CYTB and COX1 intron-containing pre-mRNAs and of the ATP6 transcript. Could be a stem-loop RNA-binding protein that plays a role in determining RNA stability. The sequence is that of Mitochondrial translation factor 2 (MTF2) from Saccharomyces cerevisiae (strain ATCC 204508 / S288c) (Baker's yeast).